We begin with the raw amino-acid sequence, 208 residues long: Large ribosomal subunit protein uL4 (208 aa).

The tract at residues 45–89 is disordered; sequence RQGTHAHKNRSAVSGGGKKPWRQKGTGRARQGSTRSPQWRGGGTV.

This sequence belongs to the universal ribosomal protein uL4 family. As to quaternary structure, part of the 50S ribosomal subunit.

Functionally, one of the primary rRNA binding proteins, this protein initially binds near the 5'-end of the 23S rRNA. It is important during the early stages of 50S assembly. It makes multiple contacts with different domains of the 23S rRNA in the assembled 50S subunit and ribosome. In terms of biological role, forms part of the polypeptide exit tunnel. This chain is Large ribosomal subunit protein uL4, found in Lactococcus lactis subsp. cremoris (strain MG1363).